The sequence spans 102 residues: uncharacterized protein (102 aa).

This is an uncharacterized protein from Ictaluridae (bullhead catfishes).